Reading from the N-terminus, the 269-residue chain is Protein MGF 110-1L (269 aa).

Residue methionine 1 is a topological domain, cytoplasmic. Residues 1–145 (MLGLQIFTLL…YVRKRSLQTV (145 aa)) form an A repeat. Residues 2–18 (LGLQIFTLLSIPTLLYT) traverse the membrane as a helical segment. Residues 19–116 (YELELLDLTR…HEWHEAVIRK (98 aa)) lie on the Extracellular side of the membrane. Asparagine 75 carries an N-linked (GlcNAc...) asparagine; by host glycan. The chain crosses the membrane as a helical span at residues 117–137 (WQKLLTYGFYLVGCVLVANYV). Residues 138–144 (RKRSLQT) are Cytoplasmic-facing. A helical membrane pass occupies residues 145–165 (VMYLLVLLVIFFLLSQLMLYR). One copy of the B repeat lies at 147–269 (YLLVLLVIFF…DNLMKKQDMM (123 aa)). Over 166-269 (ELEDKKHKIG…DNLMKKQDMM (104 aa)) the chain is Extracellular.

The protein belongs to the asfivirus MGF 110 family.

It localises to the host membrane. In terms of biological role, plays a role in virus cell tropism, and may be required for efficient virus replication in macrophages. This African swine fever virus (isolate Tick/South Africa/Pretoriuskop Pr4/1996) (ASFV) protein is Protein MGF 110-1L.